The following is a 99-amino-acid chain: Putative pterin-4-alpha-carbinolamine dehydratase (99 aa).

It belongs to the pterin-4-alpha-carbinolamine dehydratase family.

It carries out the reaction (4aS,6R)-4a-hydroxy-L-erythro-5,6,7,8-tetrahydrobiopterin = (6R)-L-erythro-6,7-dihydrobiopterin + H2O. The protein is Putative pterin-4-alpha-carbinolamine dehydratase of Aquifex aeolicus (strain VF5).